The sequence spans 318 residues: MKKIIITGALGQIGTELVIKCRERYGTENVLATDIRKPEPHSPVKNGPFEILDVTDRNRLFETVRYFNADTLMHMAALLSATAEKKPLVAWDLNMGGLINTLEAARRYQLKYFTPSSIGAFGISTPKVNTPQLTIQQPTTMYGINKVTGELLCQYYYVKFGVDTRSVRFPGLISHVKEPGGGITDYAVDMYFKAVRKGHYTSYINRYTYMDMMYMEDAIDAIIKLMEEDSVKLKTRNGYNLSAMSIEPEMLKQAIQVYYPDFTLDYDIDLERQDIALSWPDSIDTSCAQEEWGFDPKYDLPTMTKVMLEAIEKKQKEC.

Belongs to the NAD(P)-dependent epimerase/dehydratase family.

This is an uncharacterized protein from Staphylococcus epidermidis (strain ATCC 12228 / FDA PCI 1200).